A 966-amino-acid chain; its full sequence is Insulin-degrading enzyme-like 2 (966 aa).

H71 is a binding site for Zn(2+). The active-site Proton acceptor is the E74. Residue H75 coordinates Zn(2+). E145 is a catalytic residue. E152 serves as a coordination point for Zn(2+).

It belongs to the peptidase M16 family. Zn(2+) is required as a cofactor.

The sequence is that of Insulin-degrading enzyme-like 2 from Arabidopsis thaliana (Mouse-ear cress).